The following is a 193-amino-acid chain: Rho-related protein racB (193 aa).

Residues Ala13, Gly15, Lys16, Thr17, Cys18, Tyr32, Thr35, Gly60, Lys116, Asp118, and Ala159 each contribute to the GTP site. Thr17 provides a ligand contact to Mg(2+). Short sequence motifs (switch) lie at residues 26–37 (NAFPTEYVPTVF) and 57–75 (DTAGQEDYDRIRPLSYPQT). Thr35 contributes to the Mg(2+) binding site. At Cys190 the chain carries Cysteine methyl ester. Cys190 carries S-geranylgeranyl cysteine lipidation. Residues 191-193 (LIF) constitute a propeptide, removed in mature form.

This sequence belongs to the small GTPase superfamily. Rho family. It depends on Mg(2+) as a cofactor.

The protein resides in the cell membrane. The protein localises to the cytoplasm. It localises to the cytoskeleton. The catalysed reaction is GTP + H2O = GDP + phosphate + H(+). Its activity is regulated as follows. Regulated by guanine nucleotide exchange factors (GEFs) which promote the exchange of bound GDP for free GTP, GTPase activating proteins (GAPs) which increase the GTP hydrolysis activity, and GDP dissociation inhibitors which inhibit the dissociation of the nucleotide from the GTPase. Functionally, small GTPase which cycles between active GTP-bound and inactive GDP-bound states. In Entamoeba histolytica (strain ATCC 30459 / HM-1:IMSS / ABRM), this protein is Rho-related protein racB.